Reading from the N-terminus, the 221-residue chain is Protein RER1D (221 aa).

Helical transmembrane passes span 41–58 (IVRR…YIYR), 64–84 (GYFV…IGFL), 128–148 (FVVA…FWPI), and 149–169 (LLCY…VHMF). The tract at residues 200–221 (KGDGGDDRPSSSNSSQGNEKQD) is disordered. Positions 209–221 (SSSNSSQGNEKQD) are enriched in polar residues.

The protein belongs to the RER1 family.

It is found in the membrane. Functionally, involved in the retrieval of endoplasmic reticulum membrane proteins from the early Golgi compartment. The protein is Protein RER1D of Arabidopsis thaliana (Mouse-ear cress).